Here is a 54-residue protein sequence, read N- to C-terminus: Protein P32 (54 aa).

The chain crosses the membrane as a helical span at residues 4-24 (FGKTLITIVTAIIGVAIIAVI).

Its subcellular location is the virion membrane. Functionally, component of the phage injection machinery. Required for DNA injection in the membrane transformation event. Involved in the formation of the membrane tail tube to connect the virus interior with the host cytosol. Essential for viral infectivity. This Enterobacteria phage PRD1 (Bacteriophage PRD1) protein is Protein P32 (XXXII).